Here is a 205-residue protein sequence, read N- to C-terminus: ESCRT-related protein CHMP1 (205 aa).

2 coiled-coil regions span residues 13 to 51 (DLKF…MDGA) and 109 to 140 (GNLQ…GAMA).

This sequence belongs to the SNF7 family.

It is found in the cytoplasm. It localises to the endosome membrane. Its function is as follows. Involved in ESCRT-dependent multivesicular body (MVB) formation and sorting of endosomal cargo proteins into MVBs. This chain is ESCRT-related protein CHMP1, found in Oryza sativa subsp. japonica (Rice).